We begin with the raw amino-acid sequence, 962 residues long: pH-response regulator protein palF/prr-3 (962 aa).

Disordered stretches follow at residues 1–43 (MGPF…DSST), 225–326 (APPK…THPS), 568–675 (TDSN…PDEN), and 689–962 (RLLP…RYER). Basic residues predominate over residues 237–246 (ISKRAKKKRP). Composition is skewed to polar residues over residues 297 to 307 (GFSQAPRSVSH), 314 to 326 (SGDS…THPS), and 581 to 596 (PSLT…SNYV). Composition is skewed to low complexity over residues 696–722 (PIAA…PDSS) and 738–747 (PTPAATPATA). Residues 793-805 (TEDKQELERRRLL) show a composition bias toward basic and acidic residues. Residues 830 to 839 (AGPSGSRAGP) show a composition bias toward low complexity. Positions 840–849 (SAPPPAPPVA) are enriched in pro residues. Positions 913 to 928 (PSSPVLAPASAFFPAS) are enriched in low complexity. The segment covering 929 to 949 (GSGNVHDSPREQGQQARSDSS) has biased composition (polar residues).

It belongs to the arrestin family. PalF/RIM8 subfamily.

Required for the proteolytic cleavage of the transcription factor pacc-1 in response to alkaline ambient pH. The protein is pH-response regulator protein palF/prr-3 (prr-3) of Neurospora crassa (strain ATCC 24698 / 74-OR23-1A / CBS 708.71 / DSM 1257 / FGSC 987).